Consider the following 496-residue polypeptide: Probable CtpA-like serine protease (496 aa).

Positions 1-16 (MDDKQHTSSSDDERAE) are enriched in basic and acidic residues. The segment at 1–27 (MDDKQHTSSSDDERAEIATSNQDQETN) is disordered. Polar residues predominate over residues 18 to 27 (ATSNQDQETN). The chain crosses the membrane as a helical span at residues 39-59 (FISILIGTILITAVITVVAYI). The PDZ domain occupies 124 to 206 (TKSFNEGVSG…TEVTLTVQRG (83 aa)). Residues Ser-329, Asp-340, and Lys-354 each act as charge relay system in the active site.

This sequence belongs to the peptidase S41A family.

Its subcellular location is the cell membrane. This Staphylococcus aureus (strain MSSA476) protein is Probable CtpA-like serine protease.